The primary structure comprises 905 residues: Probable coatomer subunit gamma (905 aa).

HEAT repeat units follow at residues 265–302 (TQFR…NISD), 303–340 (DDLQ…TRPH), 374–412 (DESV…KFPR), 414–450 (QDSM…YIPE), and 525–563 (KFVQ…RDAF). At S604 the chain carries Phosphoserine.

It belongs to the COPG family. In terms of assembly, oligomeric complex that consists of at least the alpha, beta, beta', gamma, delta, epsilon and zeta subunits.

Its subcellular location is the cytoplasm. The protein resides in the golgi apparatus membrane. It is found in the cytoplasmic vesicle. It localises to the COPI-coated vesicle membrane. Its function is as follows. The coatomer is a cytosolic protein complex that binds to dilysine motifs and reversibly associates with Golgi non-clathrin-coated vesicles, which further mediate biosynthetic protein transport from the ER, via the Golgi up to the trans Golgi network. Coatomer complex is required for budding from Golgi membranes, and is essential for the retrograde Golgi-to-ER transport of dilysine-tagged proteins. The sequence is that of Probable coatomer subunit gamma (sec21) from Schizosaccharomyces pombe (strain 972 / ATCC 24843) (Fission yeast).